The following is a 654-amino-acid chain: Translation factor GUF1, mitochondrial (654 aa).

The region spanning 57–237 is the tr-type G domain; that stretch reads ENYRNFSIVA…SVIKNIPSPV (181 aa). GTP is bound by residues 66 to 73, 130 to 134, and 184 to 187; these read AHVDHGKS, DTPGH, and NKID.

This sequence belongs to the TRAFAC class translation factor GTPase superfamily. Classic translation factor GTPase family. LepA subfamily.

It localises to the mitochondrion inner membrane. It catalyses the reaction GTP + H2O = GDP + phosphate + H(+). Functionally, promotes mitochondrial protein synthesis. May act as a fidelity factor of the translation reaction, by catalyzing a one-codon backward translocation of tRNAs on improperly translocated ribosomes. Binds to mitochondrial ribosomes in a GTP-dependent manner. This Candida albicans (strain SC5314 / ATCC MYA-2876) (Yeast) protein is Translation factor GUF1, mitochondrial.